Reading from the N-terminus, the 397-residue chain is Protein shisa-8 (397 aa).

The N-terminal stretch at 1–38 is a signal peptide; the sequence is MARAGARGLLGGRRPPGLRLALALRLALLLARPPSGRA. At 39-138 the chain is on the extracellular side; sequence GAPEAQGPAA…APRDPGRERS (100 aa). N-linked (GlcNAc...) asparagine glycosylation is present at asparagine 75. Residues 117–136 are disordered; sequence TGRPPARARDTAAPRDPGRE. Residues 123–136 are compositionally biased toward basic and acidic residues; the sequence is RARDTAAPRDPGRE. The helical transmembrane segment at 139–159 threads the bilayer; the sequence is HTAVYAVCGVAALLVLAGIGA. Residues 160–397 lie on the Cytoplasmic side of the membrane; it reads RLGLERAHSP…RTNSKTEVTV (238 aa). 2 disordered regions span residues 182 to 250 and 281 to 303; these read LLKQ…GGSL and FPALEPSPRQPPARAPRPSPDLP. Composition is skewed to pro residues over residues 188 to 197 and 288 to 303; these read PQEPLPPTLG and PRQPPARAPRPSPDLP.

This sequence belongs to the shisa family. In terms of assembly, interacts with AMPAR subunits GRIA1 and GRIA2.

The protein resides in the membrane. In terms of biological role, may regulate trafficking and current kinetics of AMPA-type glutamate receptor (AMPAR) at synapses. This chain is Protein shisa-8, found in Homo sapiens (Human).